Reading from the N-terminus, the 106-residue chain is Urease subunit beta (106 aa).

The protein belongs to the urease beta subunit family. As to quaternary structure, heterotrimer of UreA (gamma), UreB (beta) and UreC (alpha) subunits. Three heterotrimers associate to form the active enzyme.

The protein localises to the cytoplasm. The enzyme catalyses urea + 2 H2O + H(+) = hydrogencarbonate + 2 NH4(+). It participates in nitrogen metabolism; urea degradation; CO(2) and NH(3) from urea (urease route): step 1/1. In Acinetobacter baumannii (strain ATCC 17978 / DSM 105126 / CIP 53.77 / LMG 1025 / NCDC KC755 / 5377), this protein is Urease subunit beta.